Reading from the N-terminus, the 1516-residue chain is Receptor-type tyrosine-protein phosphatase S (1516 aa).

An N-terminal signal peptide occupies residues 1–28 (MRILPSPGMPALLSLVSLLSVLLMGCVA). Over 29-854 (ESPPVFIKKP…PQPIIDGEEG (826 aa)) the chain is Extracellular. Ig-like C2-type domains follow at residues 32–122 (PVFI…AKLT), 134–223 (PNID…ANLY), and 235–317 (PRFS…AQIT). 2 disulfides stabilise this stretch: C53–C106 and C155–C206. The interval 67–71 (KKGKK) is important for binding to glycosaminoglycan chains. N-linked (GlcNAc...) asparagine glycans are attached at residues N253 and N298. A disulfide bridge connects residues C256 and C301. 4 Fibronectin type-III domains span residues 324 to 414 (APGT…TGEQ), 419 to 513 (APRN…TQQG), 517 to 606 (QPMN…TLQS), and 608 to 692 (LPKN…TAAN). The chain crosses the membrane as a helical span at residues 855 to 875 (LIWVIGPVLAVVFIICIVIAI). Residues 876–1516 (LLYKNKRKDS…YLGSFDHYAT (641 aa)) are Cytoplasmic-facing. 2 consecutive Tyrosine-protein phosphatase domains span residues 961-1216 (LSQE…LLEA) and 1248-1507 (MELE…ALEY). Residues C1157 and C1448 each act as phosphocysteine intermediate in the active site.

It belongs to the protein-tyrosine phosphatase family. Receptor class 2A subfamily. In terms of assembly, homodimer. Binding to large heparan sulfate proteoglycan structures promotes oligomerization. Binding to chondroitin sulfate proteoglycan does not lead to oligomerization. Interacts (via Ig-like domains) with NTRK1 and NTRK3, but does not form detectable complexes with NTRK2. Interacts (via extracellular domain) with the heparan sulfate proteoglycans AGRN and COL18A1. A cleavage occurs, separating the extracellular domain from the transmembrane segment. This process called 'ectodomain shedding' is thought to be involved in receptor desensitization, signal transduction and/or membrane localization. As to expression, detected in embryonic brain, dorsal root ganglion and spinal cord. Detected in embryonic retina (at protein level). Detected in embryonic brain, spinal cord, dorsal root ganglion, trigeminal ganglion, ganglia associated with the precardinal vein and vagus nerve, the inner and outer nuclear layer of the retina, limb, breast muscle, heart, gut and lung.

It is found in the cell membrane. Its subcellular location is the cell projection. It localises to the axon. The protein localises to the perikaryon. The protein resides in the cytoplasmic vesicle. It is found in the secretory vesicle. Its subcellular location is the synaptic vesicle membrane. It localises to the synapse. The protein localises to the synaptosome. The protein resides in the postsynaptic density. It is found in the neuron projection. Its subcellular location is the growth cone. It carries out the reaction O-phospho-L-tyrosyl-[protein] + H2O = L-tyrosyl-[protein] + phosphate. In terms of biological role, cell surface receptor that binds to glycosaminoglycans, including chondroitin sulfate proteoglycans and heparan sulfate proteoglycans. Binding to chondroitin sulfate and heparan sulfate proteoglycans has opposite effects on PTPRS oligomerization and regulation of neurite outgrowth. Contributes to the inhibition of neurite and axonal outgrowth by chondroitin sulfate proteoglycans, also after nerve transection. Plays a role in stimulating neurite outgrowth in response to the heparan sulfate proteoglycan GPC2. Required for normal brain development, especially for normal development of the pituitary gland and the olfactory bulb. Functions as tyrosine phosphatase. Mediates dephosphorylation of NTRK1, NTRK2 and NTRK3. Plays a role in down-regulation of signaling cascades that lead to the activation of Akt and MAP kinases. Down-regulates TLR9-mediated activation of NF-kappa-B, as well as production of TNF, interferon alpha and interferon beta. The sequence is that of Receptor-type tyrosine-protein phosphatase S (PTPRS) from Gallus gallus (Chicken).